The sequence spans 218 residues: Imidazole glycerol phosphate synthase subunit HisH (218 aa).

A Glutamine amidotransferase type-1 domain is found at 7–211 (STVIIDTGCA…LALDKASLDA (205 aa)). Cys-82 serves as the catalytic Nucleophile. Residues His-186 and Glu-188 contribute to the active site.

As to quaternary structure, heterodimer of HisH and HisF.

Its subcellular location is the cytoplasm. It catalyses the reaction 5-[(5-phospho-1-deoxy-D-ribulos-1-ylimino)methylamino]-1-(5-phospho-beta-D-ribosyl)imidazole-4-carboxamide + L-glutamine = D-erythro-1-(imidazol-4-yl)glycerol 3-phosphate + 5-amino-1-(5-phospho-beta-D-ribosyl)imidazole-4-carboxamide + L-glutamate + H(+). The catalysed reaction is L-glutamine + H2O = L-glutamate + NH4(+). It participates in amino-acid biosynthesis; L-histidine biosynthesis; L-histidine from 5-phospho-alpha-D-ribose 1-diphosphate: step 5/9. In terms of biological role, IGPS catalyzes the conversion of PRFAR and glutamine to IGP, AICAR and glutamate. The HisH subunit catalyzes the hydrolysis of glutamine to glutamate and ammonia as part of the synthesis of IGP and AICAR. The resulting ammonia molecule is channeled to the active site of HisF. This Shewanella sediminis (strain HAW-EB3) protein is Imidazole glycerol phosphate synthase subunit HisH.